Consider the following 186-residue polypeptide: MNPALSQHYREILVGLGEDPQREGLLDTPKRAAKAMQYLCHGYGQTLEEIVNGALFASDNDEMVIVRDIELYSLCEHHLLPFIGKAHVAYIPTGKVLGLSKVARIVDMFARRLQIQENLTRQIAEAVRQVTSAAGVAVVIEAQHMCMMMRGVEKQNSQMFTSVMLGAFRDSNTTRQEFLQLIGRSK.

This sequence belongs to the GTP cyclohydrolase I family. As to quaternary structure, homomer.

It carries out the reaction GTP + H2O = 7,8-dihydroneopterin 3'-triphosphate + formate + H(+). It functions in the pathway cofactor biosynthesis; 7,8-dihydroneopterin triphosphate biosynthesis; 7,8-dihydroneopterin triphosphate from GTP: step 1/1. This Pseudomonas aeruginosa (strain ATCC 15692 / DSM 22644 / CIP 104116 / JCM 14847 / LMG 12228 / 1C / PRS 101 / PAO1) protein is GTP cyclohydrolase 1 1 (folE1).